Consider the following 256-residue polypeptide: Chitinase 11 (256 aa).

The first 22 residues, 1–22 (MRRLLPLAGATLLIAAAGGASG), serve as a signal peptide directing secretion. Cystine bridges form between Cys-48–Cys-109 and Cys-214–Cys-247. Residue Glu-91 is the Proton donor of the active site.

Belongs to the glycosyl hydrolase 19 family. Chitinase class II subfamily. In terms of tissue distribution, expressed in leaves and at lower levels in roots, sheaths and meristems.

The catalysed reaction is Random endo-hydrolysis of N-acetyl-beta-D-glucosaminide (1-&gt;4)-beta-linkages in chitin and chitodextrins.. This is Chitinase 11 (Cht11) from Oryza sativa subsp. japonica (Rice).